Here is a 259-residue protein sequence, read N- to C-terminus: L-cysteine S-thiosulfotransferase subunit SoxA (259 aa).

Positions 1–23 (MRKLWFLPILLGAVGGVSLYAIA) are cleaved as a signal peptide. The Cytochrome c domain maps to 50–135 (VYAEQGRDMF…SIATYVATLS (86 aa)). Heme c-binding residues include C70, C73, H74, C108, C171, C174, and H175. R216 lines the substrate pocket. C220 provides a ligand contact to heme c. C220 acts as the Cysteine persulfide intermediate in catalysis.

Belongs to the SoxA family. In terms of assembly, heterodimer of SoxA and SoxX. Heme c is required as a cofactor. In terms of processing, cysteine persulfide at Cys-220.

It localises to the periplasm. It carries out the reaction L-cysteinyl-[SoxY protein] + thiosulfate + 2 Fe(III)-[cytochrome c] = S-sulfosulfanyl-L-cysteinyl-[SoxY protein] + 2 Fe(II)-[cytochrome c] + 2 H(+). The enzyme catalyses S-sulfanyl-L-cysteinyl-[SoxY protein] + thiosulfate + 2 Fe(III)-[cytochrome c] = S-(2-sulfodisulfanyl)-L-cysteinyl-[SoxY protein] + 2 Fe(II)-[cytochrome c] + 2 H(+). C-type diheme cytochrome, which is part of the SoxAX cytochrome complex involved in sulfur oxidation. The SoxAX complex catalyzes the formation of a heterodisulfide bond between the conserved cysteine residue on a sulfur carrier SoxYZ complex subunit SoxY and thiosulfate or other inorganic sulfur substrates. This leads to the liberation of two electrons, which may be transferred from the SoxAX complex to another cytochrome c that then channels them into the respiratory electron transport chain. Some electrons may be used for reductive CO(2) fixation. The chain is L-cysteine S-thiosulfotransferase subunit SoxA from Hydrogenobacter thermophilus (strain DSM 6534 / IAM 12695 / TK-6).